Here is a 267-residue protein sequence, read N- to C-terminus: 4-hydroxy-tetrahydrodipicolinate reductase (267 aa).

Residues 12–17 (GPRGRM), 100–102 (GTT), and 126–129 (APNF) each bind NAD(+). Histidine 156 serves as the catalytic Proton donor/acceptor. Histidine 157 is a binding site for (S)-2,3,4,5-tetrahydrodipicolinate. Lysine 160 serves as the catalytic Proton donor. 166 to 167 (GT) contacts (S)-2,3,4,5-tetrahydrodipicolinate.

This sequence belongs to the DapB family.

The protein localises to the cytoplasm. It carries out the reaction (S)-2,3,4,5-tetrahydrodipicolinate + NAD(+) + H2O = (2S,4S)-4-hydroxy-2,3,4,5-tetrahydrodipicolinate + NADH + H(+). It catalyses the reaction (S)-2,3,4,5-tetrahydrodipicolinate + NADP(+) + H2O = (2S,4S)-4-hydroxy-2,3,4,5-tetrahydrodipicolinate + NADPH + H(+). Its pathway is amino-acid biosynthesis; L-lysine biosynthesis via DAP pathway; (S)-tetrahydrodipicolinate from L-aspartate: step 4/4. Functionally, catalyzes the conversion of 4-hydroxy-tetrahydrodipicolinate (HTPA) to tetrahydrodipicolinate. This Bacillus velezensis (strain DSM 23117 / BGSC 10A6 / LMG 26770 / FZB42) (Bacillus amyloliquefaciens subsp. plantarum) protein is 4-hydroxy-tetrahydrodipicolinate reductase.